We begin with the raw amino-acid sequence, 196 residues long: Probable GTP-binding protein EngB (196 aa).

In terms of domain architecture, EngB-type G spans 22–195 (NIPEIALVGR…WQWIEERMGK (174 aa)). GTP contacts are provided by residues 30-37 (GRSNVGKS), 57-61 (GKTQT), 75-78 (DVPG), 142-145 (TKID), and 174-176 (FSA). Residues Ser-37 and Thr-59 each contribute to the Mg(2+) site.

The protein belongs to the TRAFAC class TrmE-Era-EngA-EngB-Septin-like GTPase superfamily. EngB GTPase family. Mg(2+) is required as a cofactor.

Its function is as follows. Necessary for normal cell division and for the maintenance of normal septation. This chain is Probable GTP-binding protein EngB, found in Limosilactobacillus reuteri (strain DSM 20016) (Lactobacillus reuteri).